A 335-amino-acid chain; its full sequence is Thioredoxin reductase (335 aa).

FAD is bound by residues 22–25, 44–51, N60, and V93; these read SGPA and EGTSFGGA. C145 and C148 are joined by a disulfide. Residues S166, H185, R191, I248, and Y268 each coordinate NADP(+). FAD is bound by residues D288 and 295-298; that span reads RQAV. NADP(+) is bound at residue R295.

Belongs to the class-II pyridine nucleotide-disulfide oxidoreductase family. As to quaternary structure, homodimer. The cofactor is FAD.

Its subcellular location is the cytoplasm. It catalyses the reaction [thioredoxin]-dithiol + NADP(+) = [thioredoxin]-disulfide + NADPH + H(+). The chain is Thioredoxin reductase from Mycobacterium tuberculosis (strain CDC 1551 / Oshkosh).